We begin with the raw amino-acid sequence, 134 residues long: Large ribosomal subunit protein eL32 (134 aa).

The protein belongs to the eukaryotic ribosomal protein eL32 family.

The polypeptide is Large ribosomal subunit protein eL32 (RpL32) (Spodoptera frugiperda (Fall armyworm)).